A 104-amino-acid polypeptide reads, in one-letter code: DNA-binding transcriptional repressor TubR (104 aa).

DNA-binding regions (HTH) lie at residues 43-50 (KTAVAEMI) and 54-65 (KPTVFATVNSFY).

As to quaternary structure, homodimer. Binds to tubC DNA, the TubR-DNA complex binds to TubZ.

Its function is as follows. A DNA-binding protein that is part of the type III plasmid partition system used to ensure correct segregation of the pBtoxis plasmid. Cooperatively binds to the centromere-like site (tubC), which may seed filament formation by the TubZ polymerizing GTPase, stabilizing TubZ filaments. TubR-tubC complexes track the depolymerizing minus end of the filament, probably pulling plasmid within the cell. Required for plasmid replication. Negatively regulates levels of TubZ; its effect on RNA expression has not been shown. Specifically binds iterons, 12-bp imperfect direct repeats that function as a plasmid origin of replication. Four TubR dimers bind to tubC, forming an extended bent DNA-protein filament with protein wrapping helically around the outside of the DNA. This chain is DNA-binding transcriptional repressor TubR, found in Bacillus thuringiensis subsp. israelensis.